Consider the following 335-residue polypeptide: MKSLMLVVLGNTEISTVPGISVAGATPELTKLTPPADAEYLFYEKPKIIDVIPVTPDGHPTPAIITKAARELANFPLMIVRGGTYLAPLVPHVHISDYVGRDFRKGPALQEAEEIIARARLFGEELSNTPIEELVIGESTPGGTTTAQAVLWALGYEARTSSAAPNNPQSLKEEVIKAGFERAGIKPGDFKEKPLEALKQFGDPMMAAVVGIALGFKGKVVLAGGTQMLAVAALLKALEEDMSRFMIATTKWVVNDRSATFIDTAKDIGIITYAADLDFSKSEFKGLRDYENGYVKEGVGAGGATWLAVKAGFSPEDVSRKVDELYRRLMELKAT.

Belongs to the UPF0284 family.

The protein is UPF0284 protein TON_0688 of Thermococcus onnurineus (strain NA1).